The primary structure comprises 343 residues: Heat-inducible transcription repressor HrcA (343 aa).

This sequence belongs to the HrcA family.

In terms of biological role, negative regulator of class I heat shock genes (grpE-dnaK-dnaJ and groELS operons). Prevents heat-shock induction of these operons. The sequence is that of Heat-inducible transcription repressor HrcA from Bacillus licheniformis (strain ATCC 14580 / DSM 13 / JCM 2505 / CCUG 7422 / NBRC 12200 / NCIMB 9375 / NCTC 10341 / NRRL NRS-1264 / Gibson 46).